Consider the following 102-residue polypeptide: Large ribosomal subunit protein bL21 (102 aa).

Belongs to the bacterial ribosomal protein bL21 family. Part of the 50S ribosomal subunit. Contacts protein L20.

Its function is as follows. This protein binds to 23S rRNA in the presence of protein L20. This Nitratidesulfovibrio vulgaris (strain ATCC 29579 / DSM 644 / CCUG 34227 / NCIMB 8303 / VKM B-1760 / Hildenborough) (Desulfovibrio vulgaris) protein is Large ribosomal subunit protein bL21.